Reading from the N-terminus, the 699-residue chain is Long-chain-fatty-acid--CoA ligase 1 (699 aa).

N-acetylmethionine is present on methionine 1. Position 9 is a 3'-nitrotyrosine (tyrosine 9). The helical; Signal-anchor for type III membrane protein transmembrane segment at 25-45 (LPTNTLMGFGAFAALTTFWYA) threads the bilayer. Residues 46-699 (TRPKALKPPC…IDELYSTIKI (654 aa)) lie on the Cytoplasmic side of the membrane. Tyrosine 85 is subject to Phosphotyrosine. Tyrosine 86 carries the 3'-nitrotyrosine modification. Residue serine 136 is glycosylated (O-linked (GlcNAc) serine). Lysine 208, lysine 357, and lysine 387 each carry N6-acetyllysine. Serine 621 is subject to Phosphoserine. Lysine 633 carries the post-translational modification N6-acetyllysine.

This sequence belongs to the ATP-dependent AMP-binding enzyme family. Requires Mg(2+) as cofactor. In terms of tissue distribution, liver, heart, epididymal adipose and to a lesser extent brain, small intestine and lung.

Its subcellular location is the mitochondrion outer membrane. The protein resides in the peroxisome membrane. The protein localises to the microsome membrane. It localises to the endoplasmic reticulum membrane. It catalyses the reaction a long-chain fatty acid + ATP + CoA = a long-chain fatty acyl-CoA + AMP + diphosphate. The catalysed reaction is (5Z,8Z,11Z,14Z)-eicosatetraenoate + ATP + CoA = (5Z,8Z,11Z,14Z)-eicosatetraenoyl-CoA + AMP + diphosphate. The enzyme catalyses 3,7,11,15-tetramethylhexadecanoate + ATP + CoA = phytanoyl-CoA + AMP + diphosphate. It carries out the reaction hexadecanoate + ATP + CoA = hexadecanoyl-CoA + AMP + diphosphate. It catalyses the reaction (E)-hexadec-2-enoate + ATP + CoA = (2E)-hexadecenoyl-CoA + AMP + diphosphate. The catalysed reaction is 2,6,10,14-tetramethylpentadecanoate + ATP + CoA = pristanoyl-CoA + AMP + diphosphate. The enzyme catalyses 14,15-epoxy-(5Z,8Z,11Z)-eicosatrienoate + ATP + CoA = 14,15-epoxy-(5Z,8Z,11Z)-eicosatrienoyl-CoA + AMP + diphosphate. It carries out the reaction 5-hydroxy-(6E,8Z,11Z,14Z)-eicosatetraenoate + ATP + CoA = 5-hydroxy-(6E,8Z,11Z,14Z)-eicosatetraenoyl-CoA + AMP + diphosphate. It catalyses the reaction 12-hydroxy-(5Z,8Z,10E,14Z)-eicosatetraenoate + ATP + CoA = 12-hydroxy-(5Z,8Z,10E,14Z)-eicosatetraenoyl-CoA + AMP + diphosphate. The catalysed reaction is 15-hydroxy-(5Z,8Z,11Z,13E)-eicosatetraenoate + ATP + CoA = 15-hydroxy-(5Z,8Z,11Z,13E)-eicosatetraenoyl-CoA + AMP + diphosphate. The enzyme catalyses (9Z)-octadecenoate + ATP + CoA = (9Z)-octadecenoyl-CoA + AMP + diphosphate. Inhibited at high temperature and by arachidonate. Functionally, catalyzes the conversion of long-chain fatty acids to their active form acyl-CoAs for both synthesis of cellular lipids, and degradation via beta-oxidation. Preferentially uses palmitoleate, oleate and linoleate. Preferentially activates arachidonate than epoxyeicosatrienoic acids (EETs) or hydroxyeicosatrienoic acids (HETEs). The polypeptide is Long-chain-fatty-acid--CoA ligase 1 (Rattus norvegicus (Rat)).